A 396-amino-acid chain; its full sequence is NADH-quinone oxidoreductase subunit D (396 aa).

Belongs to the complex I 49 kDa subunit family. NDH-1 is composed of 14 different subunits. Subunits NuoB, C, D, E, F, and G constitute the peripheral sector of the complex.

It localises to the cell inner membrane. It carries out the reaction a quinone + NADH + 5 H(+)(in) = a quinol + NAD(+) + 4 H(+)(out). In terms of biological role, NDH-1 shuttles electrons from NADH, via FMN and iron-sulfur (Fe-S) centers, to quinones in the respiratory chain. The immediate electron acceptor for the enzyme in this species is believed to be ubiquinone. Couples the redox reaction to proton translocation (for every two electrons transferred, four hydrogen ions are translocated across the cytoplasmic membrane), and thus conserves the redox energy in a proton gradient. This Methylobacterium sp. (strain 4-46) protein is NADH-quinone oxidoreductase subunit D.